A 349-amino-acid polypeptide reads, in one-letter code: E3 ubiquitin-protein ligase rnf146 (349 aa).

Residues 1–21 are disordered; it reads MASCGEVDHSVSSLPSSKKGS. Over residues 10–21 the composition is skewed to low complexity; it reads SVSSLPSSKKGS. The RING-type zinc finger occupies 41–79; it reads CAICLQSCVHPVQLPCRHVFCFLCVKGASWQSKRCALCR. The WWE domain occupies 97–173; that stretch reads ELKTGGRGAT…EHGRRRKIKR (77 aa). Positions 113, 116, 120, 150, 159, 169, and 181 each coordinate a glycoprotein. Disordered stretches follow at residues 226-251 and 264-349; these read TTVL…SPSL and DAPE…CTEV. Polar residues predominate over residues 283–292; sequence SMSSSPNTYA. The span at 298 to 307 shows a compositional bias: acidic residues; that stretch reads WSDDEGDGEA. The segment covering 308–317 has biased composition (basic and acidic residues); that stretch reads VEPREQRLRL.

It is found in the cytoplasm. The protein resides in the cytosol. Its subcellular location is the nucleus. It carries out the reaction S-ubiquitinyl-[E2 ubiquitin-conjugating enzyme]-L-cysteine + [acceptor protein]-L-lysine = [E2 ubiquitin-conjugating enzyme]-L-cysteine + N(6)-ubiquitinyl-[acceptor protein]-L-lysine.. It participates in protein modification; protein ubiquitination. In terms of biological role, E3 ubiquitin-protein ligase that specifically binds poly-ADP-ribosylated proteins and mediates their ubiquitination and subsequent degradation. May regulate many important biological processes, such as cell survival and DNA damage response. Acts as an activator of the Wnt signaling pathway by mediating the ubiquitination of poly-ADP-ribosylated proteins. Neuroprotective protein. Protects against cell death induced by DNA damaging agents and rescues cells from G1 arrest. Promotes cell survival after gamma-irradiation. Facilitates DNA repair. The protein is E3 ubiquitin-protein ligase rnf146 (rnf146) of Salmo salar (Atlantic salmon).